A 331-amino-acid polypeptide reads, in one-letter code: uncharacterized protein (331 aa).

4 WD repeats span residues 53 to 92 (KAHT…KSAV), 97 to 139 (QQST…KLIR), 144 to 184 (AHND…DSTD), and 300 to 331 (ASEE…AFRV).

It is found in the cytoplasm. Its subcellular location is the nucleus. This is an uncharacterized protein from Schizosaccharomyces pombe (strain 972 / ATCC 24843) (Fission yeast).